The chain runs to 612 residues: Methionine--tRNA ligase (612 aa).

Residues 12-22 carry the 'HIGH' region motif; it reads PYANGPRHIGH. Zn(2+) is bound by residues cysteine 144, cysteine 147, cysteine 157, and cysteine 160. The 'KMSKS' region motif lies at 348 to 352; that stretch reads KFSSS. An ATP-binding site is contributed by serine 351.

This sequence belongs to the class-I aminoacyl-tRNA synthetase family. MetG type 1 subfamily. In terms of assembly, monomer. Requires Zn(2+) as cofactor.

Its subcellular location is the cytoplasm. It catalyses the reaction tRNA(Met) + L-methionine + ATP = L-methionyl-tRNA(Met) + AMP + diphosphate. Is required not only for elongation of protein synthesis but also for the initiation of all mRNA translation through initiator tRNA(fMet) aminoacylation. This chain is Methionine--tRNA ligase, found in Corynebacterium kroppenstedtii (strain DSM 44385 / JCM 11950 / CIP 105744 / CCUG 35717).